The following is a 902-amino-acid chain: Gamma-tubulin complex component 2 (902 aa).

The residue at position 83 (Tyr83) is a Phosphotyrosine. Residues 875–902 (ERSQKAAPQVPVLRGPPAPAPRVAVTAQ) are disordered.

The protein belongs to the TUBGCP family. In terms of assembly, component of the gamma-tubulin ring complex (gTuRC) consisting of TUBGCP2, TUBGCP3, TUBGCP4, TUBGCP5 and TUBGCP6 and gamma-tubulin TUBG1 or TUBG2. TUBGCP2, TUBGCP3, TUBGCP4, TUBGCP5 and TUBGCP6 assemble in a 5:5:2:1:1 stoichiometry; each is associated with a gamma-tubulin, thereby arranging 14 gamma-tubulins in a helical manner. Gamma-tubulin at the first position is blocked by TUBGCP3 at the last position, allowing 13 protafilaments to grow into a microtubule. The gTuRC (via TUBGCP3 and TUBGCP6) interacts with ACTB and MZT1; the interactions form a luminal bridge that stabilizes the initial structure during complex assembly. The gTuRC (via TUBGCP2) interacts with MZT2A/MZT2B and CDK5RAP2 (via CM1 motif); the interactions play a role in gTuRC activation. Interacts with ATF5; the ATF5:PCNT:polyglutamylated tubulin (PGT) tripartite unites the mother centriole and the pericentriolar material (PCM) in the centrosome.

Its subcellular location is the cytoplasm. It is found in the cytoskeleton. The protein resides in the microtubule organizing center. The protein localises to the centrosome. In terms of biological role, component of the gamma-tubulin ring complex (gTuRC) which mediates microtubule nucleation. The gTuRC regulates the minus-end nucleation of alpha-beta tubulin heterodimers that grow into microtubule protafilaments, a critical step in centrosome duplication and spindle formation. Plays a role in neuronal migration. In Pongo abelii (Sumatran orangutan), this protein is Gamma-tubulin complex component 2 (TUBGCP2).